We begin with the raw amino-acid sequence, 739 residues long: Catalase-peroxidase 2 (739 aa).

The signal sequence occupies residues 1 to 26 (MKKSTIPSMSALTLAMSLAFGGAAIA). The tryptophyl-tyrosyl-methioninium (Trp-Tyr) (with M-253) cross-link spans 105–227 (WHSAGVYRIF…MGATQMGLIY (123 aa)). Histidine 106 (proton acceptor) is an active-site residue. Positions 227 to 253 (YVNPEGPNGVPDPLASAKEIRDTFGRM) form a cross-link, tryptophyl-tyrosyl-methioninium (Tyr-Met) (with W-105). Position 268 (histidine 268) interacts with heme b.

Belongs to the peroxidase family. Peroxidase/catalase subfamily. Homodimer or homotetramer. Heme b is required as a cofactor. Formation of the three residue Trp-Tyr-Met cross-link is important for the catalase, but not the peroxidase activity of the enzyme.

It catalyses the reaction H2O2 + AH2 = A + 2 H2O. It carries out the reaction 2 H2O2 = O2 + 2 H2O. Its function is as follows. Bifunctional enzyme with both catalase and broad-spectrum peroxidase activity. The chain is Catalase-peroxidase 2 from Shewanella sp. (strain ANA-3).